We begin with the raw amino-acid sequence, 445 residues long: Glycine--tRNA ligase (445 aa).

Substrate contacts are provided by Arg-97 and Glu-145. Residues 177–179 (RNE), 187–192 (FRTCEF), 262–263 (EV), and 308–311 (GLTR) each bind ATP. 192-196 (FEQME) contributes to the substrate binding site. Position 304–308 (304–308 (ETSAG)) interacts with substrate.

It belongs to the class-II aminoacyl-tRNA synthetase family. In terms of assembly, homodimer.

The protein resides in the cytoplasm. The catalysed reaction is tRNA(Gly) + glycine + ATP = glycyl-tRNA(Gly) + AMP + diphosphate. In terms of biological role, catalyzes the attachment of glycine to tRNA(Gly). In Borreliella burgdorferi (strain ATCC 35210 / DSM 4680 / CIP 102532 / B31) (Borrelia burgdorferi), this protein is Glycine--tRNA ligase.